Reading from the N-terminus, the 314-residue chain is Glutathione synthetase (314 aa).

The ATP-grasp domain maps to 125–309 (KLFVMNFPQL…VAAKVWDTIE (185 aa)). 151–207 (RDKHGAVVMKPLHGHGGAAVFRVMPQDMNFGSLFDMFTVTFKEPWVIQQFIPEVKHG) serves as a coordination point for ATP. Residues E280 and N282 each contribute to the Mg(2+) site.

The protein belongs to the prokaryotic GSH synthase family. Mg(2+) serves as cofactor. It depends on Mn(2+) as a cofactor.

It catalyses the reaction gamma-L-glutamyl-L-cysteine + glycine + ATP = glutathione + ADP + phosphate + H(+). It functions in the pathway sulfur metabolism; glutathione biosynthesis; glutathione from L-cysteine and L-glutamate: step 2/2. The sequence is that of Glutathione synthetase from Bradyrhizobium diazoefficiens (strain JCM 10833 / BCRC 13528 / IAM 13628 / NBRC 14792 / USDA 110).